Here is a 265-residue protein sequence, read N- to C-terminus: 3'(2'),5'-bisphosphate nucleotidase CysQ (265 aa).

Mg(2+) is bound by residues glutamate 80, aspartate 99, leucine 101, aspartate 102, and aspartate 222. Glutamate 80 lines the substrate pocket. Substrate contacts are provided by residues 101–104 (LDGT) and aspartate 222.

It belongs to the inositol monophosphatase superfamily. CysQ family. Requires Mg(2+) as cofactor.

The protein localises to the cell inner membrane. It carries out the reaction adenosine 3',5'-bisphosphate + H2O = AMP + phosphate. In terms of biological role, converts adenosine-3',5'-bisphosphate (PAP) to AMP. In Buchnera aphidicola subsp. Acyrthosiphon pisum (strain APS) (Acyrthosiphon pisum symbiotic bacterium), this protein is 3'(2'),5'-bisphosphate nucleotidase CysQ.